The following is a 448-amino-acid chain: tRNA modification GTPase MnmE (448 aa).

The (6S)-5-formyl-5,6,7,8-tetrahydrofolate site is built by Arg-25, Glu-83, and Lys-122. The 155-residue stretch at 218–372 (GFKVAIIGKP…LTQKLQKLLD (155 aa)) folds into the TrmE-type G domain. Asn-228 contacts K(+). Residues 228–233 (NTGKSS), 247–253 (SDIAGTT), and 272–275 (DTAG) contribute to the GTP site. Residue Ser-232 coordinates Mg(2+). Residues Ser-247, Ile-249, and Thr-252 each contribute to the K(+) site. Thr-253 is a Mg(2+) binding site. Lys-448 serves as a coordination point for (6S)-5-formyl-5,6,7,8-tetrahydrofolate.

It belongs to the TRAFAC class TrmE-Era-EngA-EngB-Septin-like GTPase superfamily. TrmE GTPase family. In terms of assembly, homodimer. Heterotetramer of two MnmE and two MnmG subunits. K(+) is required as a cofactor.

It is found in the cytoplasm. Its function is as follows. Exhibits a very high intrinsic GTPase hydrolysis rate. Involved in the addition of a carboxymethylaminomethyl (cmnm) group at the wobble position (U34) of certain tRNAs, forming tRNA-cmnm(5)s(2)U34. This chain is tRNA modification GTPase MnmE, found in Nitratiruptor sp. (strain SB155-2).